The sequence spans 266 residues: Large ribosomal subunit protein uL2m (266 aa).

The protein belongs to the universal ribosomal protein uL2 family.

The protein localises to the mitochondrion. The sequence is that of Large ribosomal subunit protein uL2m (mrpl2) from Dictyostelium discoideum (Social amoeba).